Reading from the N-terminus, the 632-residue chain is Chaperone protein HtpG (632 aa).

The segment at 1-339 (MTQQTMSFQA…SSDLPLNVSR (339 aa)) is a; substrate-binding. The b stretch occupies residues 340-559 (EILQESRDVK…DNDMSGYLQR (220 aa)). Positions 560–632 (MLKAAGQSAP…TNALLLSRAA (73 aa)) are c.

This sequence belongs to the heat shock protein 90 family. In terms of assembly, homodimer.

The protein localises to the cytoplasm. Functionally, molecular chaperone. Has ATPase activity. This is Chaperone protein HtpG from Burkholderia pseudomallei (strain 668).